Here is a 75-residue protein sequence, read N- to C-terminus: Small ribosomal subunit protein bS16 (75 aa).

This sequence belongs to the bacterial ribosomal protein bS16 family.

The chain is Small ribosomal subunit protein bS16 from Helicobacter pylori (strain G27).